The sequence spans 303 residues: Protease HtpX homolog (303 aa).

The next 2 membrane-spanning stretches (helical) occupy residues 4–24 (VVLFLLTNLAVIAVLSITARI) and 38–58 (MGMLLAFAALIGFGGAFISLL). His-144 lines the Zn(2+) pocket. Glu-145 is a catalytic residue. His-148 is a Zn(2+) binding site. A run of 2 helical transmembrane segments spans residues 152 to 172 (GDMVTLTLIQGVVNTFVIFLS) and 199 to 219 (ISSIAFEIVFGVLASIVVMYF). Glu-224 serves as a coordination point for Zn(2+).

This sequence belongs to the peptidase M48B family. Zn(2+) serves as cofactor.

The protein resides in the cell inner membrane. In Chlorobium phaeobacteroides (strain BS1), this protein is Protease HtpX homolog.